A 427-amino-acid polypeptide reads, in one-letter code: Glucose-6-phosphate isomerase (427 aa).

The Proton donor role is filled by E277. Catalysis depends on residues H298 and K414.

It belongs to the GPI family.

The protein resides in the cytoplasm. The enzyme catalyses alpha-D-glucose 6-phosphate = beta-D-fructose 6-phosphate. The protein operates within carbohydrate biosynthesis; gluconeogenesis. It functions in the pathway carbohydrate degradation; glycolysis; D-glyceraldehyde 3-phosphate and glycerone phosphate from D-glucose: step 2/4. In terms of biological role, catalyzes the reversible isomerization of glucose-6-phosphate to fructose-6-phosphate. The sequence is that of Glucose-6-phosphate isomerase from Mycoplasma capricolum subsp. capricolum (strain California kid / ATCC 27343 / NCTC 10154).